The sequence spans 35 residues: Defensin-B (35 aa).

Intrachain disulfides connect Cys4–Cys25, Cys10–Cys33, and Cys14–Cys35.

It localises to the secreted. Its function is as follows. Has antibacterial activity against M.luteus and E.coli. This Mytilus edulis (Blue mussel) protein is Defensin-B.